We begin with the raw amino-acid sequence, 123 residues long: Ribonuclease P protein component (123 aa).

It belongs to the RnpA family. In terms of assembly, consists of a catalytic RNA component (M1 or rnpB) and a protein subunit.

The catalysed reaction is Endonucleolytic cleavage of RNA, removing 5'-extranucleotides from tRNA precursor.. Functionally, RNaseP catalyzes the removal of the 5'-leader sequence from pre-tRNA to produce the mature 5'-terminus. It can also cleave other RNA substrates such as 4.5S RNA. The protein component plays an auxiliary but essential role in vivo by binding to the 5'-leader sequence and broadening the substrate specificity of the ribozyme. The protein is Ribonuclease P protein component of Bordetella petrii (strain ATCC BAA-461 / DSM 12804 / CCUG 43448).